Here is a 273-residue protein sequence, read N- to C-terminus: MHDANIRVAIAGAGGRMGRQLIQAALALEGVQLGAALEREGSSLLGSDAGELAGAGKTGVTVQSSLDAVKDDFDVFIDFTRPEGTLNHLAFCRQHGKGMVIGTTGFDEAGKQAIRDAAADIAIVFAANFSVGVNVMLKLLEKAAKVMGDYTDIEIIEAHHRHKVDAPSGTALAMGEAIAHALDKDLKDCAVYSREGHTGERVPGTIGFATVRAGDIVGEHTAMFADIGERLEITHKASSRMTFANGAVRSALWLSGKENGLFDMRDVLNLNNL.

NAD(+) is bound by residues 12 to 17 (GAGGRM) and E38. R39 contributes to the NADP(+) binding site. NAD(+) is bound by residues 102–104 (GTT) and 126–129 (AANF). H159 serves as the catalytic Proton donor/acceptor. H160 contacts (S)-2,3,4,5-tetrahydrodipicolinate. The active-site Proton donor is K163. 169 to 170 (GT) provides a ligand contact to (S)-2,3,4,5-tetrahydrodipicolinate.

It belongs to the DapB family. As to quaternary structure, homotetramer.

Its subcellular location is the cytoplasm. The catalysed reaction is (S)-2,3,4,5-tetrahydrodipicolinate + NAD(+) + H2O = (2S,4S)-4-hydroxy-2,3,4,5-tetrahydrodipicolinate + NADH + H(+). The enzyme catalyses (S)-2,3,4,5-tetrahydrodipicolinate + NADP(+) + H2O = (2S,4S)-4-hydroxy-2,3,4,5-tetrahydrodipicolinate + NADPH + H(+). It functions in the pathway amino-acid biosynthesis; L-lysine biosynthesis via DAP pathway; (S)-tetrahydrodipicolinate from L-aspartate: step 4/4. Catalyzes the conversion of 4-hydroxy-tetrahydrodipicolinate (HTPA) to tetrahydrodipicolinate. This is 4-hydroxy-tetrahydrodipicolinate reductase from Shigella sonnei (strain Ss046).